A 555-amino-acid chain; its full sequence is Tau-cadinol synthase (555 aa).

Positions 270, 307, 311, 448, and 451 each coordinate (2E,6E)-farnesyl diphosphate. Mg(2+) is bound by residues D307 and D311. The DDXXD motif motif lies at D307 to D311. Residues D451, S455, and E459 each contribute to the Mg(2+) site.

Belongs to the terpene synthase family. It depends on Mg(2+) as a cofactor.

It catalyses the reaction (2E,6E)-farnesyl diphosphate + H2O = tau-cadinol + diphosphate. The enzyme catalyses (2E,6E)-farnesyl diphosphate = (+)-gamma-cadinene + diphosphate. It functions in the pathway secondary metabolite biosynthesis; terpenoid biosynthesis. In terms of biological role, sesquiterpene synthase that catalyzes the formation of sesquiterpenes and sesquiterpenoid alcohols. Converts farnesyl diphosphate (FPP) to tau-cadinol. Converts FPP to gamma-cadinene. Tau-cadinol is the major product. The chain is Tau-cadinol synthase from Lavandula angustifolia (Lavender).